An 88-amino-acid polypeptide reads, in one-letter code: Putative membrane protein insertion efficiency factor (88 aa).

A disordered region spans residues 68–88 (VPPPNSDTRARGEADARSHRL). Residues 75-88 (TRARGEADARSHRL) are compositionally biased toward basic and acidic residues.

It belongs to the UPF0161 family.

The protein localises to the cell inner membrane. In terms of biological role, could be involved in insertion of integral membrane proteins into the membrane. The chain is Putative membrane protein insertion efficiency factor from Burkholderia orbicola (strain MC0-3).